Reading from the N-terminus, the 316-residue chain is Nucleoprotein (316 aa).

Residues Tyr43, Tyr46, Val76, Arg122, and Lys240 each contribute to the RNA site.

Belongs to the tenuiviruses nucleocapsid protein family.

The protein localises to the virion. It is found in the host cytoplasm. Its function is as follows. Encapsidates the genome, protecting it from nucleases. The encapsidated genomic RNA is termed the nucleocapsid (NC), and serves as template for viral transcription and replication. The protein is Nucleoprotein of Maize stripe virus (MStV).